A 485-amino-acid polypeptide reads, in one-letter code: Pup--protein ligase (485 aa).

A Mg(2+)-binding site is contributed by glutamate 33. Arginine 76 provides a ligand contact to ATP. Tyrosine 78 contacts Mg(2+). Aspartate 80 functions as the Proton acceptor in the catalytic mechanism. Residue glutamate 86 participates in Mg(2+) binding. ATP contacts are provided by threonine 89 and tryptophan 451.

This sequence belongs to the Pup ligase/Pup deamidase family. Pup-conjugating enzyme subfamily.

The catalysed reaction is ATP + [prokaryotic ubiquitin-like protein]-L-glutamate + [protein]-L-lysine = ADP + phosphate + N(6)-([prokaryotic ubiquitin-like protein]-gamma-L-glutamyl)-[protein]-L-lysine.. Its pathway is protein degradation; proteasomal Pup-dependent pathway. It participates in protein modification; protein pupylation. Catalyzes the covalent attachment of the prokaryotic ubiquitin-like protein modifier Pup to the proteasomal substrate proteins, thereby targeting them for proteasomal degradation. This tagging system is termed pupylation. The ligation reaction involves the side-chain carboxylate of the C-terminal glutamate of Pup and the side-chain amino group of a substrate lysine. This chain is Pup--protein ligase, found in Bifidobacterium longum subsp. infantis (strain ATCC 15697 / DSM 20088 / JCM 1222 / NCTC 11817 / S12).